The following is a 215-amino-acid chain: UPF0056 membrane protein bbp_248 (215 aa).

Helical transmembrane passes span 10 to 32, 52 to 74, 78 to 100, 119 to 141, 151 to 169, and 190 to 207; these read IYIS…PIFT, FSVA…LFGI, SFRI…GNFI, ISIV…TIVW, IFGC…WTLF, and IMGL…LAGL.

It belongs to the UPF0056 (MarC) family.

The protein localises to the cell membrane. The chain is UPF0056 membrane protein bbp_248 from Buchnera aphidicola subsp. Baizongia pistaciae (strain Bp).